Consider the following 149-residue polypeptide: Transcriptional repressor NrdR (149 aa).

A zinc finger lies at 3–34 (CPFCCAVDTKVIDSRLVGEGSSVRRRRQCVVC). The 91-residue stretch at 49–139 (PRVVKSNDVR…VYRSFEDIRE (91 aa)) folds into the ATP-cone domain.

The protein belongs to the NrdR family. Zn(2+) is required as a cofactor.

Negatively regulates transcription of bacterial ribonucleotide reductase nrd genes and operons by binding to NrdR-boxes. The chain is Transcriptional repressor NrdR from Erwinia tasmaniensis (strain DSM 17950 / CFBP 7177 / CIP 109463 / NCPPB 4357 / Et1/99).